A 268-amino-acid chain; its full sequence is Undecaprenyl-diphosphatase (268 aa).

6 consecutive transmembrane segments (helical) span residues 39–59 (SETF…LIYK), 75–95 (LPYF…GLWV), 106–126 (LGPV…TEKV), 179–199 (TEFA…FAWI), 214–234 (LTLA…VKWL), and 243–263 (FIPF…LVAL).

It belongs to the UppP family.

The protein localises to the cell inner membrane. It carries out the reaction di-trans,octa-cis-undecaprenyl diphosphate + H2O = di-trans,octa-cis-undecaprenyl phosphate + phosphate + H(+). Its function is as follows. Catalyzes the dephosphorylation of undecaprenyl diphosphate (UPP). Confers resistance to bacitracin. This chain is Undecaprenyl-diphosphatase, found in Methylacidiphilum infernorum (isolate V4) (Methylokorus infernorum (strain V4)).